The chain runs to 378 residues: Glutamate 5-kinase (378 aa).

K20 provides a ligand contact to ATP. The substrate site is built by S60, D147, and N159. ATP is bound by residues 179–180 and 221–227; these read TD and TGGMATK. One can recognise a PUA domain in the interval 286–364; sequence AGDIVIDAGA…QEIYKVLGYE (79 aa).

This sequence belongs to the glutamate 5-kinase family.

It localises to the cytoplasm. It carries out the reaction L-glutamate + ATP = L-glutamyl 5-phosphate + ADP. It participates in amino-acid biosynthesis; L-proline biosynthesis; L-glutamate 5-semialdehyde from L-glutamate: step 1/2. Functionally, catalyzes the transfer of a phosphate group to glutamate to form L-glutamate 5-phosphate. This Photobacterium profundum (strain SS9) protein is Glutamate 5-kinase.